The chain runs to 1138 residues: MSYNSLTTIDIDITQLLHLKSVNLRSNKLGNSSGVSYFGSMDTLQKLNLKENYLTELPSTFYLLKLSSLKLDTFTPLYQQQQQQQNQLQRPIINSQSTSNESLIHEINRSFENLSMSEPVSPRIAALKNEKKGPPKPLPKTKGLHSSSSNINTSNNITPILMSPIHDGNKKSPSIISNNNNNNNSNSNIITSNGTVIPQLVFKNEPTGGRLRSFTLDADHISPGRELVSTGSSDEILYFNSEGGCENSDSDEPIQPLSAGRSRAQTISGKQPSIINNNNNNNSGGGSGNNNNSGGGGGSRKAFQNLIKSAKQIGSNIKNKTHHINGHSSSSQSNSTTNTPSISSTPYPTSTIKTNVSDTNTPVNYNGQQQISKVIQRVSGEIDPLYSGIDSPRTLERRNSSRDDIPISPPQGCMTPIKRLGSVEGDEISAIFSSSTDANMDVSQDYSSSTPTVNSMSYQSSFLDTFDNQSTVGSPTFYQLPVSSQPPQHPPPPPPIKDNNQPKLNQSQNLINTNSNSVTTTNNSSQTTTTTTTTTTNNNNVLNLEKLHKLDFAEDINGDERCSNPLYSKKKLAGLLFPNKHHQPSALKTAKIRFKSSKRLATTVNSNSSNNLMMSNSPLSSSSMNLLQQSNSPQYSGTPTSGSFQNQSVLSATLMSSPSMSDVFSGGNSQGGGSSLSQSGSITPVAPLSAVQGSPIGNSGSVNNIYLEGDDFIRDLMQSPIINQEIEFTSEDGVPKVKNITLKMLTSLLTHEKGQSNELNGIFFDTYLLFTSIPLVIEHLESRFLNGKNHIVKQKVITFSQKWVEVCWSDFKEEHIELLLKFLNDCSEQIEKLVTGSFALRTSLNLLLNIINMKRDGTYITEEEETFEQPAPIPDFIQLPNCVDINLMDLRPHEIARQLTILDHELLTQITKQQMLDYAVHQTNSPSIVKVTDRFNYLVLWVSTEIVLSLTIEKRIETIFKFVNIALNCWYLKNFNSAIAIIAAMSKPSIEKLKQTWGFIRNTKANAPIQELKELILPTNVARLRKIMDSVEAPFIPYLGAYFSHSIAIHAGNKSIVNEQYINMQKYDMMGKIIRSITVAQEKKYNLTPVGVLQKFLTDSFVLTEKQLYSEASKIEEKGDSYITETTKFGSIFKKKDK.

3 LRR repeats span residues 1–16 (MSYN…ITQL), 18–39 (HLKS…SYFG), and 43–64 (TLQK…FYLL). 7 disordered regions span residues 126–180 (ALKN…SNNN), 239–301 (FNSE…GSRK), 319–360 (NKTH…SDTN), 389–411 (IDSP…SPPQ), 473–540 (GSPT…NNNN), 601–643 (ATTV…TSGS), and 660–680 (MSDV…SQSG). The span at 140–158 (KTKGLHSSSSNINTSNNIT) shows a compositional bias: low complexity. Residues 263–275 (RAQTISGKQPSII) are compositionally biased toward polar residues. The span at 283–299 (SGGGSGNNNNSGGGGGS) shows a compositional bias: gly residues. Residues 326–352 (GHSSSSQSNSTTNTPSISSTPYPTSTI) are compositionally biased toward low complexity. The segment covering 393–405 (RTLERRNSSRDDI) has biased composition (basic and acidic residues). Pro residues predominate over residues 487–496 (PQHPPPPPPI). A compositionally biased stretch (polar residues) spans 498-511 (DNNQPKLNQSQNLI). Low complexity-rich tracts occupy residues 512–540 (NTNS…NNNN) and 605–634 (NSNS…NSPQ). In terms of domain architecture, N-terminal Ras-GEF spans 733–855 (GVPKVKNITL…LLLNIINMKR (123 aa)). Positions 891 to 1118 (RPHEIARQLT…YSEASKIEEK (228 aa)) constitute a Ras-GEF domain.

Functionally, promotes the exchange of Ras-bound GDP by GTP. May play a role in chemotaxis. This is Ras guanine nucleotide exchange factor N (gefN) from Dictyostelium discoideum (Social amoeba).